A 407-amino-acid chain; its full sequence is Carbamoyl phosphate synthase small chain (407 aa).

The interval 1–203 is CPSase; it reads MSQNESGTIA…EPCGEYEGKE (203 aa). Ser-61, Gly-255, and Gly-257 together coordinate L-glutamine. The Glutamine amidotransferase type-1 domain maps to 207–405; it reads TVAAVDLGIK…CELMKNNSKE (199 aa). Cys-283 functions as the Nucleophile in the catalytic mechanism. Residues Phe-284, Gln-287, Asn-325, Gly-327, and Phe-328 each coordinate L-glutamine. Active-site residues include His-378 and Glu-380.

The protein belongs to the CarA family. In terms of assembly, composed of two chains; the small (or glutamine) chain promotes the hydrolysis of glutamine to ammonia, which is used by the large (or ammonia) chain to synthesize carbamoyl phosphate. Tetramer of heterodimers (alpha,beta)4.

It carries out the reaction hydrogencarbonate + L-glutamine + 2 ATP + H2O = carbamoyl phosphate + L-glutamate + 2 ADP + phosphate + 2 H(+). The catalysed reaction is L-glutamine + H2O = L-glutamate + NH4(+). The protein operates within amino-acid biosynthesis; L-arginine biosynthesis; carbamoyl phosphate from bicarbonate: step 1/1. It participates in pyrimidine metabolism; UMP biosynthesis via de novo pathway; (S)-dihydroorotate from bicarbonate: step 1/3. Its function is as follows. Small subunit of the glutamine-dependent carbamoyl phosphate synthetase (CPSase). CPSase catalyzes the formation of carbamoyl phosphate from the ammonia moiety of glutamine, carbonate, and phosphate donated by ATP, constituting the first step of 2 biosynthetic pathways, one leading to arginine and/or urea and the other to pyrimidine nucleotides. The small subunit (glutamine amidotransferase) binds and cleaves glutamine to supply the large subunit with the substrate ammonia. The sequence is that of Carbamoyl phosphate synthase small chain from Bifidobacterium longum (strain NCC 2705).